Here is an 802-residue protein sequence, read N- to C-terminus: Pyrophosphate-energized membrane proton pump 3 (802 aa).

A run of 6 helical transmembrane segments spans residues 41-61 (LNVR…FYMG), 66-86 (PIIV…VYLT), 118-138 (YGTI…IYLF), 160-180 (VAAF…GMWV), 206-226 (AGGF…AILY), and 246-266 (LPLL…FAQL). Substrate is bound at residue lysine 273. Residues aspartate 276, aspartate 280, and aspartate 306 each coordinate Mg(2+). The next 5 membrane-spanning stretches (helical) occupy residues 348-368 (FILF…IGIL), 386-406 (MVVL…TFGA), 421-441 (WLNF…FVWI), 468-491 (IIAG…VAII), and 511-531 (GGLF…AYVL). Mg(2+) is bound by residues aspartate 541 and asparagine 568. A run of 4 helical transmembrane segments spans residues 577-597 (FAIG…MDEV), 615-635 (VFIG…WACA), 686-706 (GALA…LGYY), and 716-736 (VVAA…LFLN). Mg(2+) is bound by residues aspartate 743 and aspartate 773. Lysine 776 is a binding site for substrate. Residues 782 to 802 (SIHVLIKMLATITLVMAPIFL) traverse the membrane as a helical segment.

Belongs to the H(+)-translocating pyrophosphatase (TC 3.A.10) family. K(+)-insensitive subfamily. As to quaternary structure, monomer.

It localises to the golgi apparatus membrane. The catalysed reaction is diphosphate + H2O + H(+)(in) = 2 phosphate + 2 H(+)(out). The sequence is that of Pyrophosphate-energized membrane proton pump 3 (AVPL2) from Arabidopsis thaliana (Mouse-ear cress).